A 1005-amino-acid polypeptide reads, in one-letter code: Defense-associated sirtuin 2 (1005 aa).

The tract at residues 1–295 is SIR2; that stretch reads MVKVDLESKR…YSAVMDLLIE (295 aa). Residues 56–111 form an inter-dimer interaction region; that stretch reads YPQWWRLVDKYHEELYGSPKKGNYSSDEYLRIPQIFYNVKGEMAFDGILKDFFQVD. Active-site residues include tyrosine 134, aspartate 135, and histidine 171. The tract at residues 296 to 548 is MID; it reads SQENKFITKD…YKILEFLSDN (253 aa). The CTD stretch occupies residues 549–1005; the sequence is QFLYDDTVKL…YLEILMNYFI (457 aa).

Homotetramer (dimer of dimers). Homodimer. The SIR2 domains are arranged in a central core, adopting a head-to-head arrangement, while the CTDs are positioned at the periphery of the complex. Tetramerization is necessary for the activation of NADase activity. The NADase enzymatic activity of this homotetrameric form is autoinhibited. The activated form of DSR2 (after binding to the phage tube protein) exists as tetramers and dimers, with the tetramers exhibiting more NADase activity. Each tetramer binds 4 NAD(+) molecules. As to quaternary structure, (Microbial infection) Interacts (via C-terminus) with phage SPR tail tube monomer protein (via N-terminus) in a 4:4 DSR2-Tube assembly; this interaction induces a conformation change of the tube protein and activates the NADase activity of DSR2. In terms of assembly, (Microbial infection) Interacts (via C-terminus) with phage SPbeta DSAD1 in a 4:2 ratio; this interaction prevents activation of the NADase defense activity of DSR2.

The catalysed reaction is NAD(+) + H2O = ADP-D-ribose + nicotinamide + H(+). With respect to regulation, (Microbial infection) NADase activity is activated through the binding of SPR phage tail tube monomer protein. NADase activity is inhibited through the binding to the phage SPbeta DSR anti-defense 1 (DSAD1). Functionally, anti-phage defense protein that is activated through the binding to the phage tail tube protein monomer and which hydrolyzes NAD+ upon activation (NADase activity). The resulting depletion of NAD(+) leads to an abortive infection. The chain is Defense-associated sirtuin 2 from Bacillus subtilis.